The chain runs to 223 residues: Coiled-coil domain-containing protein 124 (223 aa).

The disordered stretch occupies residues 1-126 (MPKKFQGENT…AEKAKSHLEV (126 aa)). Residues 15-82 (ARARRAEAKA…LLEEEDSKLK (68 aa)) adopt a coiled-coil conformation. Composition is skewed to basic and acidic residues over residues 18-74 (RRAE…QRLL) and 99-126 (QIEDTLRRDHQLREAPDTAEKAKSHLEV). Phosphoserine occurs at positions 141 and 194. A disordered region spans residues 204-223 (WLRSPDNPMNQRAVPFNAPK).

The protein belongs to the CCDC124 family. As to quaternary structure, associates with translationally inactive ribosomes in the nonrotated state. Interacts with RASGEF1B. In terms of tissue distribution, ubiquitously expressed.

Its subcellular location is the cytoplasm. It is found in the cytoskeleton. The protein resides in the microtubule organizing center. The protein localises to the centrosome. It localises to the midbody. Its function is as follows. Ribosome-binding protein involved in ribosome hibernation: associates with translationally inactive ribosomes and stabilizes the nonrotated conformation of the 80S ribosome, thereby promoting ribosome preservation and storage. Also required for proper progression of late cytokinetic stages. This chain is Coiled-coil domain-containing protein 124, found in Homo sapiens (Human).